The primary structure comprises 194 residues: Probable RNA polymerase sigma factor HI_1459 (194 aa).

The Polymerase core binding signature appears at aspartate 45–leucine 58. A DNA-binding region (H-T-H motif) is located at residues serine 161–tyrosine 180.

It belongs to the sigma-70 factor family. ECF subfamily.

The chain is Probable RNA polymerase sigma factor HI_1459 from Haemophilus influenzae (strain ATCC 51907 / DSM 11121 / KW20 / Rd).